Here is a 590-residue protein sequence, read N- to C-terminus: UvrABC system protein C (590 aa).

A GIY-YIG domain is found at 14-91 (DQPGCYLMKD…IKKHDPKYNV (78 aa)). The UVR domain maps to 196–231 (NEVKKELEEKMHEAAENLEFERAKELRDQIAHIEST).

This sequence belongs to the UvrC family. Interacts with UvrB in an incision complex.

It is found in the cytoplasm. Functionally, the UvrABC repair system catalyzes the recognition and processing of DNA lesions. UvrC both incises the 5' and 3' sides of the lesion. The N-terminal half is responsible for the 3' incision and the C-terminal half is responsible for the 5' incision. This chain is UvrABC system protein C, found in Bacillus subtilis (strain 168).